We begin with the raw amino-acid sequence, 240 residues long: Phosphoribosylaminoimidazole-succinocarboxamide synthase (240 aa).

The protein belongs to the SAICAR synthetase family.

It carries out the reaction 5-amino-1-(5-phospho-D-ribosyl)imidazole-4-carboxylate + L-aspartate + ATP = (2S)-2-[5-amino-1-(5-phospho-beta-D-ribosyl)imidazole-4-carboxamido]succinate + ADP + phosphate + 2 H(+). The protein operates within purine metabolism; IMP biosynthesis via de novo pathway; 5-amino-1-(5-phospho-D-ribosyl)imidazole-4-carboxamide from 5-amino-1-(5-phospho-D-ribosyl)imidazole-4-carboxylate: step 1/2. In Acidithiobacillus ferrooxidans (strain ATCC 23270 / DSM 14882 / CIP 104768 / NCIMB 8455) (Ferrobacillus ferrooxidans (strain ATCC 23270)), this protein is Phosphoribosylaminoimidazole-succinocarboxamide synthase.